A 251-amino-acid chain; its full sequence is Segregation and condensation protein A (251 aa).

It belongs to the ScpA family. Component of a cohesin-like complex composed of ScpA, ScpB and the Smc homodimer, in which ScpA and ScpB bind to the head domain of Smc. The presence of the three proteins is required for the association of the complex with DNA.

Its subcellular location is the cytoplasm. Functionally, participates in chromosomal partition during cell division. May act via the formation of a condensin-like complex containing Smc and ScpB that pull DNA away from mid-cell into both cell halves. This chain is Segregation and condensation protein A, found in Bacillus velezensis (strain DSM 23117 / BGSC 10A6 / LMG 26770 / FZB42) (Bacillus amyloliquefaciens subsp. plantarum).